The chain runs to 217 residues: Uracil-DNA glycosylase (217 aa).

Residue aspartate 62 is the Proton acceptor of the active site.

The protein belongs to the uracil-DNA glycosylase (UDG) superfamily. UNG family.

The protein localises to the cytoplasm. The enzyme catalyses Hydrolyzes single-stranded DNA or mismatched double-stranded DNA and polynucleotides, releasing free uracil.. Its function is as follows. Excises uracil residues from the DNA which can arise as a result of misincorporation of dUMP residues by DNA polymerase or due to deamination of cytosine. The sequence is that of Uracil-DNA glycosylase from Streptococcus uberis (strain ATCC BAA-854 / 0140J).